A 358-amino-acid chain; its full sequence is Peptide chain release factor 1 (358 aa).

Position 233 is an N5-methylglutamine (Gln-233).

Belongs to the prokaryotic/mitochondrial release factor family. Post-translationally, methylated by PrmC. Methylation increases the termination efficiency of RF1.

It localises to the cytoplasm. In terms of biological role, peptide chain release factor 1 directs the termination of translation in response to the peptide chain termination codons UAG and UAA. This chain is Peptide chain release factor 1, found in Blochmanniella floridana.